A 225-amino-acid chain; its full sequence is UPF0758 protein BAMEG_4721 (225 aa).

Positions Ser-103 to Ile-225 constitute an MPN domain. The Zn(2+) site is built by His-174, His-176, and Asp-187. A JAMM motif motif is present at residues His-174–Asp-187.

This sequence belongs to the UPF0758 family.

This Bacillus anthracis (strain CDC 684 / NRRL 3495) protein is UPF0758 protein BAMEG_4721.